Reading from the N-terminus, the 365-residue chain is Succinate--CoA ligase [ADP-forming] subunit beta (365 aa).

The region spanning 9 to 230 (KEIFRAEGIS…EMEEYEPEEF (222 aa)) is the ATP-grasp domain. Residues K45, 52–54 (GRG), E90, I93, and E98 contribute to the ATP site. Residues N190 and D203 each coordinate Mg(2+). Residues N244 and 300-302 (GIT) each bind substrate.

It belongs to the succinate/malate CoA ligase beta subunit family. In terms of assembly, heterotetramer of two alpha and two beta subunits. Requires Mg(2+) as cofactor.

The enzyme catalyses succinate + ATP + CoA = succinyl-CoA + ADP + phosphate. It carries out the reaction GTP + succinate + CoA = succinyl-CoA + GDP + phosphate. The protein operates within carbohydrate metabolism; tricarboxylic acid cycle; succinate from succinyl-CoA (ligase route): step 1/1. In terms of biological role, succinyl-CoA synthetase functions in the citric acid cycle (TCA), coupling the hydrolysis of succinyl-CoA to the synthesis of either ATP or GTP and thus represents the only step of substrate-level phosphorylation in the TCA. The beta subunit provides nucleotide specificity of the enzyme and binds the substrate succinate, while the binding sites for coenzyme A and phosphate are found in the alpha subunit. The protein is Succinate--CoA ligase [ADP-forming] subunit beta of Methanothermobacter thermautotrophicus (strain ATCC 29096 / DSM 1053 / JCM 10044 / NBRC 100330 / Delta H) (Methanobacterium thermoautotrophicum).